We begin with the raw amino-acid sequence, 145 residues long: Large ribosomal subunit protein uL16 (145 aa).

Belongs to the universal ribosomal protein uL16 family. Part of the 50S ribosomal subunit.

Functionally, binds 23S rRNA and is also seen to make contacts with the A and possibly P site tRNAs. In Lactobacillus johnsonii (strain CNCM I-12250 / La1 / NCC 533), this protein is Large ribosomal subunit protein uL16.